The chain runs to 126 residues: MSNIPAELKYIASHEWLRLEDDGTITVGITDHAQDLLGDVVFVELPDVGDIIAVDDEISVVESVKAASDVYAPISGEVVAINEALEDDPEIINSDPYGEGWFFRMKPDNIADYEALLTADEYENEL.

The 83-residue stretch at 24-106 folds into the Lipoyl-binding domain; that stretch reads TITVGITDHA…YGEGWFFRMK (83 aa). Position 65 is an N6-lipoyllysine (K65).

Belongs to the GcvH family. As to quaternary structure, the glycine cleavage system is composed of four proteins: P, T, L and H. (R)-lipoate is required as a cofactor.

In terms of biological role, the glycine cleavage system catalyzes the degradation of glycine. The H protein shuttles the methylamine group of glycine from the P protein to the T protein. The chain is Glycine cleavage system H protein from Psychrobacter arcticus (strain DSM 17307 / VKM B-2377 / 273-4).